The primary structure comprises 288 residues: ATP synthase gamma chain (288 aa).

Belongs to the ATPase gamma chain family. In terms of assembly, F-type ATPases have 2 components, CF(1) - the catalytic core - and CF(0) - the membrane proton channel. CF(1) has five subunits: alpha(3), beta(3), gamma(1), delta(1), epsilon(1). CF(0) has three main subunits: a, b and c.

It localises to the cell membrane. In terms of biological role, produces ATP from ADP in the presence of a proton gradient across the membrane. The gamma chain is believed to be important in regulating ATPase activity and the flow of protons through the CF(0) complex. The polypeptide is ATP synthase gamma chain (Staphylococcus aureus (strain bovine RF122 / ET3-1)).